Consider the following 275-residue polypeptide: 3-methyl-2-oxobutanoate hydroxymethyltransferase (275 aa).

D55 and D94 together coordinate Mg(2+). Residues 55–56, D94, and K123 each bind 3-methyl-2-oxobutanoate; that span reads DS. Position 125 (E125) interacts with Mg(2+). E192 serves as the catalytic Proton acceptor.

The protein belongs to the PanB family. Homodecamer; pentamer of dimers. The cofactor is Mg(2+).

It is found in the cytoplasm. The catalysed reaction is 3-methyl-2-oxobutanoate + (6R)-5,10-methylene-5,6,7,8-tetrahydrofolate + H2O = 2-dehydropantoate + (6S)-5,6,7,8-tetrahydrofolate. It functions in the pathway cofactor biosynthesis; (R)-pantothenate biosynthesis; (R)-pantoate from 3-methyl-2-oxobutanoate: step 1/2. Catalyzes the reversible reaction in which hydroxymethyl group from 5,10-methylenetetrahydrofolate is transferred onto alpha-ketoisovalerate to form ketopantoate. The sequence is that of 3-methyl-2-oxobutanoate hydroxymethyltransferase from Halorhodospira halophila (strain DSM 244 / SL1) (Ectothiorhodospira halophila (strain DSM 244 / SL1)).